Consider the following 402-residue polypeptide: 4-hydroxy-3-methylbut-2-enyl diphosphate reductase (402 aa).

Cysteine 66 provides a ligand contact to [4Fe-4S] cluster. Histidine 96 is a (2E)-4-hydroxy-3-methylbut-2-enyl diphosphate binding site. Histidine 96 contacts dimethylallyl diphosphate. Histidine 96 lines the isopentenyl diphosphate pocket. Cysteine 157 is a [4Fe-4S] cluster binding site. A (2E)-4-hydroxy-3-methylbut-2-enyl diphosphate-binding site is contributed by histidine 185. Histidine 185 contributes to the dimethylallyl diphosphate binding site. Residue histidine 185 participates in isopentenyl diphosphate binding. The active-site Proton donor is the glutamate 187. Threonine 250 lines the (2E)-4-hydroxy-3-methylbut-2-enyl diphosphate pocket. Position 288 (cysteine 288) interacts with [4Fe-4S] cluster. The (2E)-4-hydroxy-3-methylbut-2-enyl diphosphate site is built by serine 317, serine 318, asparagine 319, and serine 379. Dimethylallyl diphosphate is bound by residues serine 317, serine 318, asparagine 319, and serine 379. Isopentenyl diphosphate-binding residues include serine 317, serine 318, asparagine 319, and serine 379.

This sequence belongs to the IspH family. [4Fe-4S] cluster is required as a cofactor.

It carries out the reaction isopentenyl diphosphate + 2 oxidized [2Fe-2S]-[ferredoxin] + H2O = (2E)-4-hydroxy-3-methylbut-2-enyl diphosphate + 2 reduced [2Fe-2S]-[ferredoxin] + 2 H(+). The enzyme catalyses dimethylallyl diphosphate + 2 oxidized [2Fe-2S]-[ferredoxin] + H2O = (2E)-4-hydroxy-3-methylbut-2-enyl diphosphate + 2 reduced [2Fe-2S]-[ferredoxin] + 2 H(+). It functions in the pathway isoprenoid biosynthesis; dimethylallyl diphosphate biosynthesis; dimethylallyl diphosphate from (2E)-4-hydroxy-3-methylbutenyl diphosphate: step 1/1. Its pathway is isoprenoid biosynthesis; isopentenyl diphosphate biosynthesis via DXP pathway; isopentenyl diphosphate from 1-deoxy-D-xylulose 5-phosphate: step 6/6. Functionally, catalyzes the conversion of 1-hydroxy-2-methyl-2-(E)-butenyl 4-diphosphate (HMBPP) into a mixture of isopentenyl diphosphate (IPP) and dimethylallyl diphosphate (DMAPP). Acts in the terminal step of the DOXP/MEP pathway for isoprenoid precursor biosynthesis. This chain is 4-hydroxy-3-methylbut-2-enyl diphosphate reductase, found in Nostoc punctiforme (strain ATCC 29133 / PCC 73102).